The primary structure comprises 171 residues: Endoribonuclease YbeY (171 aa).

Zn(2+) contacts are provided by histidine 115, histidine 119, and histidine 125.

It belongs to the endoribonuclease YbeY family. Requires Zn(2+) as cofactor.

It localises to the cytoplasm. In terms of biological role, single strand-specific metallo-endoribonuclease involved in late-stage 70S ribosome quality control and in maturation of the 3' terminus of the 16S rRNA. This Tropheryma whipplei (strain TW08/27) (Whipple's bacillus) protein is Endoribonuclease YbeY.